Consider the following 410-residue polypeptide: LL-diaminopimelate aminotransferase (410 aa).

Residues Tyr15 and Gly42 each contribute to the substrate site. Pyridoxal 5'-phosphate-binding positions include Tyr72, 108–109 (SK), Tyr132, Asn187, Tyr218, and 246–248 (SFS). Substrate contacts are provided by Lys109, Tyr132, and Asn187. N6-(pyridoxal phosphate)lysine is present on Lys249. Pyridoxal 5'-phosphate contacts are provided by Arg257 and Asn292. Substrate contacts are provided by Asn292 and Arg388.

This sequence belongs to the class-I pyridoxal-phosphate-dependent aminotransferase family. LL-diaminopimelate aminotransferase subfamily. Homodimer. Requires pyridoxal 5'-phosphate as cofactor.

It carries out the reaction (2S,6S)-2,6-diaminopimelate + 2-oxoglutarate = (S)-2,3,4,5-tetrahydrodipicolinate + L-glutamate + H2O + H(+). It participates in amino-acid biosynthesis; L-lysine biosynthesis via DAP pathway; LL-2,6-diaminopimelate from (S)-tetrahydrodipicolinate (aminotransferase route): step 1/1. Functionally, involved in the synthesis of meso-diaminopimelate (m-DAP or DL-DAP), required for both lysine and peptidoglycan biosynthesis. Catalyzes the direct conversion of tetrahydrodipicolinate to LL-diaminopimelate. This chain is LL-diaminopimelate aminotransferase, found in Geobacter metallireducens (strain ATCC 53774 / DSM 7210 / GS-15).